A 513-amino-acid polypeptide reads, in one-letter code: Bifunctional purine biosynthesis protein PurH (513 aa).

The 145-residue stretch at 1–145 (MNKRAIISVY…KNFKYTTVIV (145 aa)) folds into the MGS-like domain.

It belongs to the PurH family.

It catalyses the reaction (6R)-10-formyltetrahydrofolate + 5-amino-1-(5-phospho-beta-D-ribosyl)imidazole-4-carboxamide = 5-formamido-1-(5-phospho-D-ribosyl)imidazole-4-carboxamide + (6S)-5,6,7,8-tetrahydrofolate. The catalysed reaction is IMP + H2O = 5-formamido-1-(5-phospho-D-ribosyl)imidazole-4-carboxamide. It participates in purine metabolism; IMP biosynthesis via de novo pathway; 5-formamido-1-(5-phospho-D-ribosyl)imidazole-4-carboxamide from 5-amino-1-(5-phospho-D-ribosyl)imidazole-4-carboxamide (10-formyl THF route): step 1/1. It functions in the pathway purine metabolism; IMP biosynthesis via de novo pathway; IMP from 5-formamido-1-(5-phospho-D-ribosyl)imidazole-4-carboxamide: step 1/1. The protein is Bifunctional purine biosynthesis protein PurH of Caldicellulosiruptor bescii (strain ATCC BAA-1888 / DSM 6725 / KCTC 15123 / Z-1320) (Anaerocellum thermophilum).